The chain runs to 155 residues: Small ribosomal subunit protein uS7c (155 aa).

It belongs to the universal ribosomal protein uS7 family. In terms of assembly, part of the 30S ribosomal subunit.

The protein resides in the plastid. Its function is as follows. One of the primary rRNA binding proteins, it binds directly to 16S rRNA where it nucleates assembly of the head domain of the 30S subunit. The sequence is that of Small ribosomal subunit protein uS7c (rps7) from Aneura mirabilis (Parasitic liverwort).